The chain runs to 102 residues: Large ribosomal subunit protein bL21 (102 aa).

Belongs to the bacterial ribosomal protein bL21 family. Part of the 50S ribosomal subunit. Contacts protein L20.

In terms of biological role, this protein binds to 23S rRNA in the presence of protein L20. This chain is Large ribosomal subunit protein bL21, found in Listeria innocua serovar 6a (strain ATCC BAA-680 / CLIP 11262).